The chain runs to 590 residues: Zinc finger protein 703 (590 aa).

Residues M1 to E14 are compositionally biased toward polar residues. Disordered stretches follow at residues M1–R43, C96–V293, and L341–A366. At S2 the chain carries N-acetylserine. Low complexity-rich tracts occupy residues P27–P37, R128–A139, G171–K189, and A207–G219. The span at E241–P251 shows a compositional bias: basic and acidic residues. A Phosphoserine modification is found at S252. Composition is skewed to gly residues over residues R260–E273 and L341–L352. Residues H456 to H484 form a C2H2-type zinc finger. The residue at position 580 (R580) is an Omega-N-methylarginine.

This sequence belongs to the Elbow/Noc family. Interacts with TLE4; increases transcriptional repression. Interacts with DCAF7 and PHB2. May interact with HSPD1. Expressed in mammary epithelium.

The protein localises to the nucleus. The protein resides in the cytoplasm. Its function is as follows. Transcriptional corepressor which does not bind directly to DNA and may regulate transcription through recruitment of histone deacetylases to gene promoters. Regulates cell adhesion, migration and proliferation. May be required for segmental gene expression during hindbrain development. The chain is Zinc finger protein 703 (ZNF703) from Homo sapiens (Human).